A 102-amino-acid chain; its full sequence is MYAIIVTGGKQYKVEAGQAIYVEKLDAQAGDKVTFDKVVFVGGDDTKIGTPFVDGASVEGTVDKQGKEKKVVTFKYKPKKHTHTKQGHRQPYTKVTIDAINA.

The protein belongs to the bacterial ribosomal protein bL21 family. As to quaternary structure, part of the 50S ribosomal subunit. Contacts protein L20.

This protein binds to 23S rRNA in the presence of protein L20. The polypeptide is Large ribosomal subunit protein bL21 (Limosilactobacillus fermentum (strain NBRC 3956 / LMG 18251) (Lactobacillus fermentum)).